Here is a 598-residue protein sequence, read N- to C-terminus: UvrABC system protein C (598 aa).

The region spanning 14–91 is the GIY-YIG domain; the sequence is DSPGCYLHKD…IQKNMPKYNI (78 aa). In terms of domain architecture, UVR spans 196–231; it reads DKIIEDLRSKMLAASEEMAFERAAEYRDLISGIATM.

This sequence belongs to the UvrC family. As to quaternary structure, interacts with UvrB in an incision complex.

It localises to the cytoplasm. Its function is as follows. The UvrABC repair system catalyzes the recognition and processing of DNA lesions. UvrC both incises the 5' and 3' sides of the lesion. The N-terminal half is responsible for the 3' incision and the C-terminal half is responsible for the 5' incision. The chain is UvrABC system protein C from Streptococcus pyogenes serotype M5 (strain Manfredo).